Consider the following 215-residue polypeptide: 23.2 kDa heat shock protein (215 aa).

Residues 1–27 (MASMRTAAAAAMLACIAVVLASTAADG) form the signal peptide. The sHSP domain occupies 69 to 189 (DVAMLSMARV…GPRVVGIASA (121 aa)). The segment at 183–215 (VVGIASAGGDDGGKKSIGGAGEGQNQQAKKVEL) is disordered. Over residues 205–215 (GQNQQAKKVEL) the composition is skewed to polar residues.

Belongs to the small heat shock protein (HSP20) family. As to quaternary structure, may form oligomeric structures.

It localises to the endoplasmic reticulum. The polypeptide is 23.2 kDa heat shock protein (HSP23.2) (Oryza sativa subsp. japonica (Rice)).